The following is a 296-amino-acid chain: Polyadenylate-binding protein 2-A (296 aa).

The disordered stretch occupies residues 1 to 106; sequence MAAVSSVASL…GELTGDQTIE (106 aa). A compositionally biased stretch (gly residues) spans 71–82; the sequence is GRGGSGGGGAGG. The span at 84 to 97 shows a compositional bias: acidic residues; sequence EELEDEELEEEEPG. Positions 107–141 form a coiled coil; the sequence is DPELEAIKARVREMEEEAEKLKELQNEVEKQMNMS. The interval 146–296 is necessary for homooligomerization; that stretch reads NAGPVIMSVE…ARATSWYTPY (151 aa). The RRM domain occupies 163–240; sequence RSIYVGNVDY…RQIKVVPKRT (78 aa).

Monomer and homooligomer. Binds RNA as a monomer and oligomerizes when bound to poly(A). In terms of tissue distribution, shows dynamic spatial expression throughout development. First expressed in the animal pole region of the egg and this pattern persists through to the blastula stage. In gastrula and neurula embryos, expressed mainly in ectodermal, neural and epidermal regions. Neural tissue-specific expression pattern persists into tailbud stage when expression is localized to the brain and spinal cord. At early tadpole stage, expression becomes gradually confined to the specific vesicle regions of the developing brain. At stage 39, expressed in the telencephalon and mesencephalon regions of the brain. Also detected in the eye and olfactory pit at the tadpole stage. Expressed during gut endoderm development. At stage 35, expressed exclusively in the anterior portion of the gut endoderm, which includes the prospective liver, stomach and pancreas. As development proceeds, expression becomes restricted to the pancreas, and by stage 46/47 (the seventh day of development) expression is localized exclusively to the pancreas. Expressed in most adult tissues.

The protein localises to the nucleus. Its subcellular location is the cytoplasm. Functionally, involved in the 3'-end formation of mRNA precursors (pre-mRNA) by the addition of a poly(A) tail of 200-250 nt to the upstream cleavage product. Stimulates poly(A) polymerase (PAPOLA) conferring processivity on the poly(A) tail elongation reaction and also controls the poly(A) tail length. Increases the affinity of poly(A) polymerase for RNA. Binds to poly(A) and to poly(G) with high affinity. May protect the poly(A) tail from degradation. This is Polyadenylate-binding protein 2-A (pabpn1-a) from Xenopus laevis (African clawed frog).